The chain runs to 352 residues: Protein RecA (352 aa).

An ATP-binding site is contributed by 65–72 (GPESSGKT).

It belongs to the RecA family.

The protein localises to the cytoplasm. In terms of biological role, can catalyze the hydrolysis of ATP in the presence of single-stranded DNA, the ATP-dependent uptake of single-stranded DNA by duplex DNA, and the ATP-dependent hybridization of homologous single-stranded DNAs. It interacts with LexA causing its activation and leading to its autocatalytic cleavage. This Pseudomonas fluorescens (strain Pf0-1) protein is Protein RecA.